The primary structure comprises 197 residues: Large ribosomal subunit protein bL25 (197 aa).

It belongs to the bacterial ribosomal protein bL25 family. CTC subfamily. Part of the 50S ribosomal subunit; part of the 5S rRNA/L5/L18/L25 subcomplex. Contacts the 5S rRNA. Binds to the 5S rRNA independently of L5 and L18.

In terms of biological role, this is one of the proteins that binds to the 5S RNA in the ribosome where it forms part of the central protuberance. This is Large ribosomal subunit protein bL25 from Hydrogenobaculum sp. (strain Y04AAS1).